Here is a 158-residue protein sequence, read N- to C-terminus: Retinoic acid receptor beta (158 aa).

The segment covering 1 to 18 has biased composition (low complexity); sequence RHSAQSIETQSTSSEELV. The interval 1–24 is disordered; that stretch reads RHSAQSIETQSTSSEELVPSPPSP. A DNA-binding region (nuclear receptor) is located at residues 31 to 106; that stretch reads YKPCFVCQDK…VGMSKESVRN (76 aa). NR C4-type zinc fingers lie at residues 34-54 and 70-94; these read CFVC…CEGC and CHRD…LQRC. Residues 129-158 form the NR LBD domain; it reads ELDDLTEKIRKAHQETFPSLCQLGKYTTNS.

Belongs to the nuclear hormone receptor family. NR1 subfamily. As to quaternary structure, heterodimer; with a RXR molecule. Binds DNA preferentially as a RAR/RXR heterodimer.

Its subcellular location is the nucleus. In terms of biological role, receptor for retinoic acid. Retinoic acid receptors bind as heterodimers to their target response elements in response to their ligands, all-trans or 9-cis retinoic acid, and regulate gene expression in various biological processes. The RAR/RXR heterodimers bind to the retinoic acid response elements (RARE) composed of tandem 5'-AGGTCA-3' sites known as DR1-DR5. This chain is Retinoic acid receptor beta (RARB), found in Notophthalmus viridescens (Eastern newt).